Consider the following 220-residue polypeptide: Pro-Pro endopeptidase (220 aa).

The signal sequence occupies residues methionine 1 to alanine 26. Residues lysine 35–lysine 220 enclose the ATLF-like domain. Interacts with substrate peptide stretches follow at residues lysine 101 to tryptophan 103 and glycine 117 to serine 119. Histidine 142 serves as a coordination point for Zn(2+). Catalysis depends on glutamate 143, which acts as the Proton acceptor. Positions 146, 178, and 185 each coordinate Zn(2+).

This sequence belongs to the peptidase M34 family. Pro-Pro endopeptidase subfamily. In terms of assembly, monomer. Zn(2+) is required as a cofactor.

It localises to the secreted. It carries out the reaction The enzyme catalyzes the hydrolytic cleavage of peptide bonds between two proline residues.. Its activity is regulated as follows. Is inhibited by the chelating agent o-phenanthroline in vitro. Its function is as follows. Zinc-dependent endoprotease with a unique preference for proline residues surrounding the scissile bond. Exhibits a high preference for an asparagine at the P2 position and hydrophobic residues (Val, Ile, Leu) at the P3 position. Efficiently cleaves the LPXTG cell surface proteins CD630_28310 and CD630_32460 at multiple cleavage sites in vivo. Has a role in the regulation of C.difficile adhesion versus motility by cleaving surface adhesion proteins such as the collagen binding protein CD630_28310, and is important for efficient infection. Is also able to cleave fibronectin and fibrinogen in vitro; cleaves at the N-terminus of the beta-chain of fibrinogen. Destabilizes the fibronectin network produced by human fibroblasts. Therefore, may be important in key steps of clostridial pathogenesis by degrading extracellular matrix components associated with the gut epithelial cells. To a lesser extent, IgA1, IgA2, and human HSP 90-beta, but not HSP 90-alpha, are also substrates for the enzyme. Is not active on different collagen types, casein and gelatin. In Clostridioides difficile (strain 630) (Peptoclostridium difficile), this protein is Pro-Pro endopeptidase.